Reading from the N-terminus, the 303-residue chain is tRNA dimethylallyltransferase 1 (303 aa).

An ATP-binding site is contributed by 9–16; that stretch reads GPTASGKT. 11–16 lines the substrate pocket; it reads TASGKT. Interaction with substrate tRNA stretches follow at residues 34–37, 158–162, and 239–244; these read DSAL, QRLIR, and RCVGYR.

Belongs to the IPP transferase family. Monomer. Requires Mg(2+) as cofactor.

The catalysed reaction is adenosine(37) in tRNA + dimethylallyl diphosphate = N(6)-dimethylallyladenosine(37) in tRNA + diphosphate. Functionally, catalyzes the transfer of a dimethylallyl group onto the adenine at position 37 in tRNAs that read codons beginning with uridine, leading to the formation of N6-(dimethylallyl)adenosine (i(6)A). The protein is tRNA dimethylallyltransferase 1 of Shewanella sediminis (strain HAW-EB3).